Consider the following 310-residue polypeptide: Nitric oxide synthase-interacting protein homolog (310 aa).

A compositionally biased stretch (polar residues) spans 115-124; that stretch reads FSAIESTPSR. Positions 115 to 141 are disordered; it reads FSAIESTPSRTGAVATPRPEVGSLKRQ.

The protein belongs to the NOSIP family.

The protein resides in the cytoplasm. Its subcellular location is the nucleus. Negatively regulates nitric oxide production by inducing nitric oxide synthase translocation to actin cytoskeleton and inhibiting its enzymatic activity. This Caenorhabditis elegans protein is Nitric oxide synthase-interacting protein homolog.